We begin with the raw amino-acid sequence, 362 residues long: Peptide chain release factor 1 (362 aa).

Gln232 is modified (N5-methylglutamine).

This sequence belongs to the prokaryotic/mitochondrial release factor family. Post-translationally, methylated by PrmC. Methylation increases the termination efficiency of RF1.

It localises to the cytoplasm. Peptide chain release factor 1 directs the termination of translation in response to the peptide chain termination codons UAG and UAA. The polypeptide is Peptide chain release factor 1 (Myxococcus xanthus).